The following is a 233-amino-acid chain: Large ribosomal subunit protein eL6z (233 aa).

The disordered stretch occupies residues 175-195 (EFFEAEKEEKKEIPQEKKEDQ).

This sequence belongs to the eukaryotic ribosomal protein eL6 family.

The polypeptide is Large ribosomal subunit protein eL6z (RPL6A) (Arabidopsis thaliana (Mouse-ear cress)).